The following is a 222-amino-acid chain: Sugar fermentation stimulation protein homolog (222 aa).

The protein belongs to the SfsA family.

The polypeptide is Sugar fermentation stimulation protein homolog (Thermotoga sp. (strain RQ2)).